The following is a 63-amino-acid chain: MGKVHGSLARAGKVKSQTPKVEKQEKPKKPQGRAYMRLLYTRRFVNVTLTNGKRKMNPSPASQ.

The disordered stretch occupies residues 1-33 (MGKVHGSLARAGKVKSQTPKVEKQEKPKKPQGR).

The protein belongs to the eukaryotic ribosomal protein eS30 family. In terms of assembly, component of the small ribosomal subunit. Mature ribosomes consist of a small (40S) and a large (60S) subunit. The 40S subunit contains about 32 different proteins and 1 molecule of RNA (18S). The 60S subunit contains 45 different proteins and 3 molecules of RNA (25S, 5.8S and 5S).

It localises to the cytoplasm. In terms of biological role, component of the ribosome, a large ribonucleoprotein complex responsible for the synthesis of proteins in the cell. The small ribosomal subunit (SSU) binds messenger RNAs (mRNAs) and translates the encoded message by selecting cognate aminoacyl-transfer RNA (tRNA) molecules. The large subunit (LSU) contains the ribosomal catalytic site termed the peptidyl transferase center (PTC), which catalyzes the formation of peptide bonds, thereby polymerizing the amino acids delivered by tRNAs into a polypeptide chain. The nascent polypeptides leave the ribosome through a tunnel in the LSU and interact with protein factors that function in enzymatic processing, targeting, and the membrane insertion of nascent chains at the exit of the ribosomal tunnel. In Candida albicans (strain SC5314 / ATCC MYA-2876) (Yeast), this protein is Small ribosomal subunit protein eS30 (RPS30).